Reading from the N-terminus, the 453-residue chain is Allantoinase (453 aa).

Zn(2+) is bound by residues His59, His61, Lys146, His186, His242, and Asp315. At Lys146 the chain carries N6-carboxylysine.

The protein belongs to the metallo-dependent hydrolases superfamily. Allantoinase family. Homotetramer. It depends on Zn(2+) as a cofactor. Carboxylation allows a single lysine to coordinate two zinc ions.

It carries out the reaction (S)-allantoin + H2O = allantoate + H(+). The protein operates within nitrogen metabolism; (S)-allantoin degradation; allantoate from (S)-allantoin: step 1/1. In terms of biological role, catalyzes the conversion of allantoin (5-ureidohydantoin) to allantoic acid by hydrolytic cleavage of the five-member hydantoin ring. The protein is Allantoinase of Escherichia coli (strain K12 / MC4100 / BW2952).